A 446-amino-acid polypeptide reads, in one-letter code: MTTPPGPPNAGGDARTGTDTVIVVGGEDWEQVVAAAEQAQAGERIVVNMGPQHPSTHGVLRLILEIEGETITEARCGIGYLHTGIEKNLEYRNWTQGVTFVTRMDYLSPFFNETAYCLGVEKLLGVTDAIPERVNVIRVMLMELNRISSHLVALATGGMELGAMSAMFYGFREREEILSVFEMITGLRMNHAYIRPGGLAADLPDGAVPRIRELLALLPGRLRDLENLLNENYIWKARTQGIGYLDLAGCMALGITGPVLRSTGLPHDLRRAQPYCGYEDYEFDVITDDGCDAYGRYLIRVKEMRESLKIVEQCVDRLKPGPVMIADKKLAWPADLELGPDGLGNSPAHIARIMGQSMEGLIHHFKLVTEGIRVPAGQVYTAVESPRGELGVHMVSDGGTRPYRVHYRDPSFTNLQAVAAMCEGGMVADAISAVASIDPVMGGVDR.

Belongs to the complex I 49 kDa subunit family. As to quaternary structure, NDH-1 is composed of 14 different subunits. Subunits NuoB, C, D, E, F, and G constitute the peripheral sector of the complex.

The protein resides in the cell membrane. It catalyses the reaction a quinone + NADH + 5 H(+)(in) = a quinol + NAD(+) + 4 H(+)(out). In terms of biological role, NDH-1 shuttles electrons from NADH, via FMN and iron-sulfur (Fe-S) centers, to quinones in the respiratory chain. The immediate electron acceptor for the enzyme in this species is believed to be a menaquinone. Couples the redox reaction to proton translocation (for every two electrons transferred, four hydrogen ions are translocated across the cytoplasmic membrane), and thus conserves the redox energy in a proton gradient. This Mycobacterium sp. (strain JLS) protein is NADH-quinone oxidoreductase subunit D.